Here is a 495-residue protein sequence, read N- to C-terminus: MKYRDLRDFLSLLEQRGELKRISQPIDPYLEMTEIADRTLRAGGPALLFENPKGYSMPVLCNLFGTAKRVAMGMGQEDVSALRDVGKLLAFLKEPDPPKGFRDLFDKLPKFKQVLNMPTKRLNSAPCQEQVWQGEDVDLSRIPVMHCWPEDAAPLVSWGLTITRGPHKERQNLGIYRQQVLGKNKLIMRWLSHRGGALDYQEWCEAHPGERFPVAVALGADPATILAAVTPVPDTLSEYAFAGLLRGHKTEVVKCLSNDLEVPASAEIVLEGYIEQGDMAPEGPYGDHTGYYNEIDNFPVFTVTHITQRQDAIYHSTYTGRPPDEPAVMGVALNEVFVPILQKQFPEIVDFYLPPEGCSYRLAVVTIKKQYAGHAKRVMMGVWSFLRQFMYTKFVIVCDDDINARDWNDVIWAITTRMDPSRDTVLIENTPIDYLDFASPVSGLGSKMGLDATNKWPAETPREWGRPIKMDEDVRARIDALWDELAIFSDKDAKR.

N172 provides a ligand contact to Mn(2+). Residues 175-177, 189-191, and 194-195 contribute to the prenylated FMN site; these read IYR, RWL, and RG. E238 is a binding site for Mn(2+). D287 serves as the catalytic Proton donor.

Belongs to the UbiD family. In terms of assembly, homohexamer. It depends on prenylated FMN as a cofactor. Requires Mn(2+) as cofactor.

The protein resides in the cell membrane. It catalyses the reaction a 4-hydroxy-3-(all-trans-polyprenyl)benzoate + H(+) = a 2-(all-trans-polyprenyl)phenol + CO2. It functions in the pathway cofactor biosynthesis; ubiquinone biosynthesis. Catalyzes the decarboxylation of 3-octaprenyl-4-hydroxy benzoate to 2-octaprenylphenol, an intermediate step in ubiquinone biosynthesis. This is 3-octaprenyl-4-hydroxybenzoate carboxy-lyase from Yersinia pseudotuberculosis serotype O:1b (strain IP 31758).